The following is a 635-amino-acid chain: Chaperone protein HtpG (635 aa).

The interval 1–344 (MSETATTNKE…SNDLPLNVSR (344 aa)) is a; substrate-binding. A b region spans residues 345–561 (EILQDNKITQ…DYEMGTQMAK (217 aa)). The interval 562–635 (LLAAAGQPVP…AVNQLLAPSH (74 aa)) is c.

The protein belongs to the heat shock protein 90 family. In terms of assembly, homodimer.

It localises to the cytoplasm. Molecular chaperone. Has ATPase activity. In Vibrio cholerae serotype O1 (strain ATCC 39541 / Classical Ogawa 395 / O395), this protein is Chaperone protein HtpG.